We begin with the raw amino-acid sequence, 232 residues long: MSIVNSVRAQIPPIHREGYPFVGGFALVTLILFWIWSPLGWIGTVLTIWCAYFFRNPARTTPVRDGLVVSPADGRVSMVVDIIPPPELGLGAKPLPRVSIFMSVFNCHVNRSPVAGRIERIVYSPGKFINAELDKASEDNERNSMVLSTEHGQIGVIQIAGLIARRIVSFVREGQPLVAGERFGLIRFGSRLDVYLPEGTKPLVAEGQTAIAGETILADLKGGDAGRTYRTD.

Serine 190 serves as the catalytic Schiff-base intermediate with substrate; via pyruvic acid. The residue at position 190 (serine 190) is a Pyruvic acid (Ser); by autocatalysis.

Belongs to the phosphatidylserine decarboxylase family. PSD-A subfamily. In terms of assembly, heterodimer of a large membrane-associated beta subunit and a small pyruvoyl-containing alpha subunit. It depends on pyruvate as a cofactor. In terms of processing, is synthesized initially as an inactive proenzyme. Formation of the active enzyme involves a self-maturation process in which the active site pyruvoyl group is generated from an internal serine residue via an autocatalytic post-translational modification. Two non-identical subunits are generated from the proenzyme in this reaction, and the pyruvate is formed at the N-terminus of the alpha chain, which is derived from the carboxyl end of the proenzyme. The post-translation cleavage follows an unusual pathway, termed non-hydrolytic serinolysis, in which the side chain hydroxyl group of the serine supplies its oxygen atom to form the C-terminus of the beta chain, while the remainder of the serine residue undergoes an oxidative deamination to produce ammonia and the pyruvoyl prosthetic group on the alpha chain.

The protein resides in the cell membrane. It carries out the reaction a 1,2-diacyl-sn-glycero-3-phospho-L-serine + H(+) = a 1,2-diacyl-sn-glycero-3-phosphoethanolamine + CO2. It functions in the pathway phospholipid metabolism; phosphatidylethanolamine biosynthesis; phosphatidylethanolamine from CDP-diacylglycerol: step 2/2. Catalyzes the formation of phosphatidylethanolamine (PtdEtn) from phosphatidylserine (PtdSer). The chain is Phosphatidylserine decarboxylase proenzyme from Rhodopseudomonas palustris (strain ATCC BAA-98 / CGA009).